We begin with the raw amino-acid sequence, 432 residues long: Gamma-glutamyl phosphate reductase (432 aa).

This sequence belongs to the gamma-glutamyl phosphate reductase family.

Its subcellular location is the cytoplasm. The enzyme catalyses L-glutamate 5-semialdehyde + phosphate + NADP(+) = L-glutamyl 5-phosphate + NADPH + H(+). Its pathway is amino-acid biosynthesis; L-proline biosynthesis; L-glutamate 5-semialdehyde from L-glutamate: step 2/2. In terms of biological role, catalyzes the NADPH-dependent reduction of L-glutamate 5-phosphate into L-glutamate 5-semialdehyde and phosphate. The product spontaneously undergoes cyclization to form 1-pyrroline-5-carboxylate. The polypeptide is Gamma-glutamyl phosphate reductase (Deinococcus radiodurans (strain ATCC 13939 / DSM 20539 / JCM 16871 / CCUG 27074 / LMG 4051 / NBRC 15346 / NCIMB 9279 / VKM B-1422 / R1)).